The chain runs to 515 residues: Maturase K (515 aa).

This sequence belongs to the intron maturase 2 family. MatK subfamily.

The protein localises to the plastid. The protein resides in the chloroplast. In terms of biological role, usually encoded in the trnK tRNA gene intron. Probably assists in splicing its own and other chloroplast group II introns. The chain is Maturase K from Pinus clausa (Sand pine).